The primary structure comprises 454 residues: Asparagine--tRNA ligase (454 aa).

The protein belongs to the class-II aminoacyl-tRNA synthetase family. Homodimer.

It localises to the cytoplasm. It carries out the reaction tRNA(Asn) + L-asparagine + ATP = L-asparaginyl-tRNA(Asn) + AMP + diphosphate + H(+). This chain is Asparagine--tRNA ligase, found in Mycoplasma capricolum subsp. capricolum (strain California kid / ATCC 27343 / NCTC 10154).